The sequence spans 543 residues: Oxalate--CoA ligase (543 aa).

196–207 is a binding site for ATP; the sequence is HTSGTTSTPKTV. Residues 410–458 carry the FACS motif; sequence ENYFRTGDQGYFDPEGFLVLTGRIKELINRGGEKISPIELDGIMLSHPK. The short motif at 541–543 is the C-terminal peroxisome targeting signal (PTS1) element; the sequence is SKL.

This sequence belongs to the ATP-dependent AMP-binding enzyme family. As to quaternary structure, interacts with PEX5.

It localises to the peroxisome matrix. The protein resides in the peroxisome membrane. It carries out the reaction oxalate + ATP + CoA = oxalyl-CoA + AMP + diphosphate. Catalyzes the first step in a degradation pathway of oxalate to CO(2) to protect the cell against the harmful effects of oxalate derived from endogenous processes or an environmental sources. This chain is Oxalate--CoA ligase, found in Saccharomyces cerevisiae (strain ATCC 204508 / S288c) (Baker's yeast).